The primary structure comprises 769 residues: MGCNMCVVQKPEEQYKVMLQVNGKELSKLSQEQTLQALRSSKEPLVIQVLRRSPRLRGDSSCHDLQLVDSGTQTDITFEHIMALGKLRPPTPPMVILEPPPISHEYYDPAEFMEGGPQEADRLDELEYEEVELYKSSHRDKLGLMVCYRTDDEEDLGIYVGEVNPNSIAAKDGRIREGDRIIQINGVDVQNREEAVAILSQEENTNISLLVARPESQLAKRWKDSDRDDFLDDFGSENEGELRARKLKSPPAQQPGNEEEKGAPDAGPGLSNSQELDSGVGRTDESTRNEESSEHDLLGDEPPSSTNTPGSLRKFGLQGDALQSRDFHFSMDSLLAEGAGLGGGDVPGLTDEEYERYRELLEIKCHLENGNQLGLLFPRASGGNSALDVNRNESLGHEMAMLEEELRHLEFKCRNILRAQKMQQLRERCMKAWLLEEESLYDLAASEPKKHELSDISELPEKSDKDSTSAYNTGESCRSTPLLVEPLPESPLRRAMAGNSNLNRTPPGPAVATPAKAAPPPGSPAKFRSLSRDPEAGRRQHAEERGRRNPKTGLTLERVGPESSPYLSRRHRGQGQEGEHYHSCVQLAPTRGLEELGHGPLSLAGGPRVGGVAAAATEAPRMEWKVKVRSDGTRYVAKRPVRDRLLKARALKIREERSGMTTDDDAVSEMKMGRYWSKEERKQHLIRAREQRKRREFMMQSRLECLREQQNGDSKPELNIIALSHRKTMKKRNKKILDNWITIQEMLAHGARSADGKRVYNPLLSVTTV.

One can recognise a PDZ domain in the interval 130–214 (EVELYKSSHR…TNISLLVARP (85 aa)). The disordered stretch occupies residues 221–315 (RWKDSDRDDF…TNTPGSLRKF (95 aa)). Residues 229-239 (DFLDDFGSENE) are compositionally biased toward acidic residues. Residue Ser236 is modified to Phosphoserine. Basic and acidic residues predominate over residues 282 to 298 (RTDESTRNEESSEHDLL). The stretch at 389–419 (VNRNESLGHEMAMLEEELRHLEFKCRNILRA) forms a coiled coil. Residues 445 to 579 (ASEPKKHELS…RHRGQGQEGE (135 aa)) form a disordered region. Residues 447 to 467 (EPKKHELSDISELPEKSDKDS) are compositionally biased toward basic and acidic residues. The residue at position 454 (Ser454) is a Phosphoserine. Over residues 468-479 (TSAYNTGESCRS) the composition is skewed to polar residues. Over residues 530–547 (LSRDPEAGRRQHAEERGR) the composition is skewed to basic and acidic residues.

As to expression, brain-specific. Expressed in fetal and adult brain. Up-regulated in synovial carcinomas.

The protein localises to the cytoplasm. The protein resides in the cell cortex. In Homo sapiens (Human), this protein is PDZ domain-containing protein 4 (PDZD4).